A 378-amino-acid polypeptide reads, in one-letter code: MKIVADENIPLVNEFFGHLGEITRLPGRSMTAEDVRAADVLIVRSVTPVNAALLEGSRVRFVGTCTIGVDHLDQAWLEQQGIAWSSAPGCNANSVVEYVYAALCHLDIHWLHGRFGIIGCGNVGGLLYRRLKAQGVDVRCYDPNLTLAQNPDLTSLEDVLACDFISMHTPLVTTGSYPSFHLVGERELAQLRPGAILINAGRGAVVDNQALLDCLRVRHDVRVVLDVWEPEPDISLELLNEVAIGSPHIAGYSYDGKLNGTAMIYQACCKHIGVAPQADLSELVPPLDDNLLDTAGLTQPWPLAKHLIKQVYDIAADDARLREQAQLACAGNSEFGAGFDHLRKHYPRRREFHNYQVRLSAQAEAARHWLTVLGFRCV.

The substrate site is built by S45 and T66. NAD(+)-binding residues include D142 and T169. Residue R202 is part of the active site. D226 lines the NAD(+) pocket. Residue E231 is part of the active site. H248 functions as the Proton donor in the catalytic mechanism. G251 serves as a coordination point for NAD(+). Y252 is a binding site for substrate.

It belongs to the D-isomer specific 2-hydroxyacid dehydrogenase family. PdxB subfamily. Homodimer.

It is found in the cytoplasm. It carries out the reaction 4-phospho-D-erythronate + NAD(+) = (R)-3-hydroxy-2-oxo-4-phosphooxybutanoate + NADH + H(+). It functions in the pathway cofactor biosynthesis; pyridoxine 5'-phosphate biosynthesis; pyridoxine 5'-phosphate from D-erythrose 4-phosphate: step 2/5. In terms of biological role, catalyzes the oxidation of erythronate-4-phosphate to 3-hydroxy-2-oxo-4-phosphonooxybutanoate. In Cellvibrio japonicus (strain Ueda107) (Pseudomonas fluorescens subsp. cellulosa), this protein is Erythronate-4-phosphate dehydrogenase.